Reading from the N-terminus, the 335-residue chain is Serpentine receptor class alpha-25 (335 aa).

The next 5 membrane-spanning stretches (helical) occupy residues 22 to 42, 151 to 171, 195 to 215, 245 to 265, and 280 to 300; these read IPVK…FYFA, LLII…YGVP, FRTV…YLSV, CILI…VNYI, and LAPF…VIYF.

Belongs to the nematode receptor-like protein sra family.

It is found in the membrane. The polypeptide is Serpentine receptor class alpha-25 (sra-25) (Caenorhabditis elegans).